Here is a 434-residue protein sequence, read N- to C-terminus: Probable G-protein coupled receptor 150 (434 aa).

The Extracellular segment spans residues 1–3 (MED). Residues 4 to 24 (LFSPSILPPAPNISVPILLGW) traverse the membrane as a helical segment. Residues 25-43 (GLNLTLGQGAPASGPPSRR) are Cytoplasmic-facing. Residues 44-64 (VRLVFLGVILVVAVAGNTTVL) form a helical membrane-spanning segment. Residues 65 to 81 (CRLCGGGGPWAGPKRRK) lie on the Extracellular side of the membrane. Residues 82–102 (MDFLLVQLALADLYACGGTAL) traverse the membrane as a helical segment. The Cytoplasmic portion of the chain corresponds to 103–162 (SQLAWELLGEPRAATGDLACRFLQLLQASGRGASAHLVVLIALERRRAVRLPHGRPLPAR). The chain crosses the membrane as a helical span at residues 163–183 (ALAALGWLLALLLALPPAFVV). Over 184–237 (RGDSPSPLPPPPPPTSLQPGAPPAARAWPGERRCHGIFAPLPRWHLQVYAFYEA) the chain is Extracellular. Residues 188 to 210 (PSPLPPPPPPTSLQPGAPPAARA) are disordered. Positions 189-205 (SPLPPPPPPTSLQPGAP) are enriched in pro residues. The chain crosses the membrane as a helical span at residues 238 to 258 (VAGFVAPVTVLGVACGHLLSV). Residues 259–293 (WWRHRPQAPAAAAPWSASPGRAPAPSALPRAKVQS) lie on the Cytoplasmic side of the membrane. Residues 294–314 (LKMSLLLALLFVGCELPYFAA) form a helical membrane-spanning segment. Residues 315–334 (RLAAAWSSGPAGDWEGEGLS) lie on the Extracellular side of the membrane. A helical transmembrane segment spans residues 335 to 355 (AALRVVAMANSALNPFVYLFF). The Cytoplasmic portion of the chain corresponds to 356 to 434 (QAGDCRLRRQ…PLPCSCESAF (79 aa)). Residues 398–407 (WPHPHYHHAR) show a composition bias toward basic residues. The disordered stretch occupies residues 398 to 434 (WPHPHYHHARREPLDEGGLRPPPPRPRPLPCSCESAF). The segment covering 417 to 426 (RPPPPRPRPL) has biased composition (pro residues).

Belongs to the G-protein coupled receptor 1 family.

It is found in the cell membrane. Orphan receptor. This is Probable G-protein coupled receptor 150 (GPR150) from Homo sapiens (Human).